The chain runs to 198 residues: Glycerol-3-phosphate acyltransferase (198 aa).

A run of 5 helical transmembrane segments spans residues 4-24 (LALI…AVLI), 53-75 (SAAG…GGYF), 80-102 (PFML…FFHF), 112-132 (LGAL…CWVV), and 134-154 (VLVT…APLF).

Belongs to the PlsY family. Probably interacts with PlsX.

The protein localises to the cell inner membrane. It catalyses the reaction an acyl phosphate + sn-glycerol 3-phosphate = a 1-acyl-sn-glycero-3-phosphate + phosphate. It participates in lipid metabolism; phospholipid metabolism. In terms of biological role, catalyzes the transfer of an acyl group from acyl-phosphate (acyl-PO(4)) to glycerol-3-phosphate (G3P) to form lysophosphatidic acid (LPA). This enzyme utilizes acyl-phosphate as fatty acyl donor, but not acyl-CoA or acyl-ACP. This is Glycerol-3-phosphate acyltransferase from Aliivibrio fischeri (strain ATCC 700601 / ES114) (Vibrio fischeri).